Here is a 431-residue protein sequence, read N- to C-terminus: MRTQGQQISDRLTVEVDCHSLGPADCPSMTSSFSPLESPTPTPTSLYSHGSLTSPSWHEAGHYHSLPMERRPSGTPLRNAFRVTDFPSADPMGMQVGTMERPDQLPVSSEYLSGYDDINDQLWIPHDSIPKTFEHPTFPYQAPMPQYHHTMGRNHYYRPQAHTAYLPESASNPCLSRPMFSRHDGLSHSASMSNMLPWMTAPESLAPQTITPQQAFPGAGPVTPPSSNYSDFPASLQTFKPHTPSTPVRSLSLGTPRSDTPQSRMSGHYDYSEEYPVSPVYRDGHLIRTHRQPSRKPSKKQLVRSNLSLEKLPPIIKQVQFKCKEPGCKGRFKRQEHLKRHMKSHSKEKPHVCWVPGCHRAFSRSDNLNAHYTKTHSKRGGRNRYVATLDETSPDYDPEFRGQLTPDGRPIYGSKLEDLADCDLSVDGWED.

Disordered stretches follow at residues 29-51 (MTSS…SHGS), 211-275 (TPQQ…SEEY), and 287-306 (IRTH…VRSN). Positions 30–48 (TSSFSPLESPTPTPTSLYS) are enriched in low complexity. The span at 225 to 265 (PSSNYSDFPASLQTFKPHTPSTPVRSLSLGTPRSDTPQSRM) shows a compositional bias: polar residues. The segment covering 287–302 (IRTHRQPSRKPSKKQL) has biased composition (basic residues). C2H2-type zinc fingers lie at residues 321 to 345 (FKCK…MKSH) and 351 to 376 (HVCW…TKTH). Positions 390–412 (DETSPDYDPEFRGQLTPDGRPIY) are disordered.

It localises to the nucleus. Its function is as follows. BrlA, abaA and wetA are pivotal regulators of conidiophore development and conidium maturation. They act individually and together to regulate their own expression and that of numerous other sporulation-specific genes. Binds promoters of target genes at brlA response elements (BREs) containing the conserved sequence 5'-(C/A)(A/G)AGGG(G/A)-3'. Regulates the expression levels of seven secondary metabolism gene clusters including a down-regulated cluster putatively involved in the biosynthesis of the mycotoxins roquefortine C and meleagrin. Negatively regulates the expression of cellulase genes. The chain is C2H2 type master regulator of conidiophore development brlA from Penicillium oxalicum (strain 114-2 / CGMCC 5302) (Penicillium decumbens).